A 1083-amino-acid polypeptide reads, in one-letter code: Probable arabinosyltransferase B (1083 aa).

The next 13 helical transmembrane spans lie at 23-45, 222-239, 252-274, 331-350, 357-379, 421-443, 456-478, 525-542, 555-572, 576-598, 611-633, 648-670, and 690-712; these read VARW…TPLL, FAMM…VALW, LIPA…FLLW, SMWI…LLLS, LGPA…LAAW, TAAF…LAGG, AVGA…TVVF, FGFL…LITL, AWRL…LTFA, WVHH…TVLV, AFLA…WWYV, DGIT…AYYL, and FWAP…MVAG.

The protein belongs to the emb family.

It localises to the cell membrane. Its function is as follows. Arabinosyl transferase responsible for the polymerization of arabinose into the arabinan of arabinogalactan. The protein is Probable arabinosyltransferase B (embB) of Mycobacterium leprae (strain TN).